The primary structure comprises 156 residues: Perlucin-like protein (156 aa).

A signal peptide spans 1 to 22; it reads MGKLTVVGILTLFIFYIVAASG. Disulfide bonds link Cys-30–Cys-41, Cys-58–Cys-156, and Cys-131–Cys-147. One can recognise a C-type lectin domain in the interval 37–156; that stretch reads YKTNCYFFSP…CNTDQMGYIC (120 aa).

As to expression, component of the organic matrix of calcified shell layers like nacre and prisms.

Its subcellular location is the secreted. This Mytilus galloprovincialis (Mediterranean mussel) protein is Perlucin-like protein.